We begin with the raw amino-acid sequence, 114 residues long: Hydrogenase maturation factor HypA (114 aa).

His-2 provides a ligand contact to Ni(2+). Zn(2+) contacts are provided by Cys-73, Cys-76, Cys-90, and Cys-93.

The protein belongs to the HypA/HybF family.

In terms of biological role, involved in the maturation of [NiFe] hydrogenases. Required for nickel insertion into the metal center of the hydrogenase. This Klebsiella pneumoniae subsp. pneumoniae (strain ATCC 700721 / MGH 78578) protein is Hydrogenase maturation factor HypA.